Here is a 439-residue protein sequence, read N- to C-terminus: Ribosomal protein uS12 methylthiotransferase RimO (439 aa).

The 111-residue stretch at 4–114 (PKVGFVSLGR…VVRAVHGVAP (111 aa)) folds into the MTTase N-terminal domain. Residues 133-370 (LTPRHYAYLK…MEHQQAISTA (238 aa)) form the Radical SAM core domain. The [4Fe-4S] cluster site is built by C147, C151, and C154. Residues 373 to 439 (STRVGREIDV…EYDLWGERIA (67 aa)) form the TRAM domain.

The protein belongs to the methylthiotransferase family. RimO subfamily. Requires [4Fe-4S] cluster as cofactor.

The protein localises to the cytoplasm. The catalysed reaction is L-aspartate(89)-[ribosomal protein uS12]-hydrogen + (sulfur carrier)-SH + AH2 + 2 S-adenosyl-L-methionine = 3-methylsulfanyl-L-aspartate(89)-[ribosomal protein uS12]-hydrogen + (sulfur carrier)-H + 5'-deoxyadenosine + L-methionine + A + S-adenosyl-L-homocysteine + 2 H(+). Catalyzes the methylthiolation of an aspartic acid residue of ribosomal protein uS12. The polypeptide is Ribosomal protein uS12 methylthiotransferase RimO (Bordetella bronchiseptica (strain ATCC BAA-588 / NCTC 13252 / RB50) (Alcaligenes bronchisepticus)).